The following is an 87-amino-acid chain: MSQVEFEMACASLKQLKGPLSDQEKLLVYSFYKQATQGDCNIPVPPATDVKAKAKWEAWMVNKGMSKMDAMRIYIAKVEELKKNETC.

Residues 2–87 form the ACB domain; sequence SQVEFEMACA…VEELKKNETC (86 aa). An acyl-CoA is bound by residues 29–33, K55, and Y74; that span reads YSFYK.

This sequence belongs to the ACBP family. In terms of tissue distribution, testis.

It is found in the cytoplasm. In terms of biological role, may be involved in the energy metabolism of the mature sperm. The protein is Diazepam-binding inhibitor-like 5 (Dbil5) of Rattus norvegicus (Rat).